Here is a 101-residue protein sequence, read N- to C-terminus: Small ribosomal subunit protein uS10 (101 aa).

Belongs to the universal ribosomal protein uS10 family. In terms of assembly, part of the 30S ribosomal subunit.

Its function is as follows. Involved in the binding of tRNA to the ribosomes. This chain is Small ribosomal subunit protein uS10, found in Anaeromyxobacter dehalogenans (strain 2CP-C).